A 143-amino-acid chain; its full sequence is Nucleoside diphosphate kinase (143 aa).

Positions 11, 59, 87, 93, 104, and 114 each coordinate ATP. H117 functions as the Pros-phosphohistidine intermediate in the catalytic mechanism.

It belongs to the NDK family. Homotetramer. Mg(2+) serves as cofactor.

The protein resides in the cytoplasm. The catalysed reaction is a 2'-deoxyribonucleoside 5'-diphosphate + ATP = a 2'-deoxyribonucleoside 5'-triphosphate + ADP. The enzyme catalyses a ribonucleoside 5'-diphosphate + ATP = a ribonucleoside 5'-triphosphate + ADP. In terms of biological role, major role in the synthesis of nucleoside triphosphates other than ATP. The ATP gamma phosphate is transferred to the NDP beta phosphate via a ping-pong mechanism, using a phosphorylated active-site intermediate. The chain is Nucleoside diphosphate kinase from Klebsiella pneumoniae (strain 342).